The chain runs to 241 residues: MMKIKIIFSYDGSAFLGSATQPHKKGVQDVLSEALSHLGIFSPLLMASRTDKGVHASYAVASVECGDHFVNLEYLQKQLNKFSHPFIHIKKIEKVKDDFEVRFDVKSREYRYIFSHSSYSPFMASYVYFYPKFDLGKANELLGFFVGKKDLKFFCKSGGDNKTTLREIFIARAYAYKDFSIFHFKANGFLRGQIRLSVASVLKVLEGKMSEKELKEQIEAKKQCNHFLAPPNGLYLSRICY.

Residue D51 is the Nucleophile of the active site. Residue Y110 participates in substrate binding.

Belongs to the tRNA pseudouridine synthase TruA family. In terms of assembly, homodimer.

The enzyme catalyses uridine(38/39/40) in tRNA = pseudouridine(38/39/40) in tRNA. In terms of biological role, formation of pseudouridine at positions 38, 39 and 40 in the anticodon stem and loop of transfer RNAs. This chain is tRNA pseudouridine synthase A, found in Campylobacter jejuni subsp. doylei (strain ATCC BAA-1458 / RM4099 / 269.97).